The sequence spans 227 residues: PKHD-type hydroxylase Bcen_3557 (227 aa).

The 101-residue stretch at 78–178 folds into the Fe2OG dioxygenase domain; the sequence is KVFPPLFNRY…RVASFFWIQS (101 aa). Fe cation contacts are provided by His-96, Asp-98, and His-159. Arg-169 contacts 2-oxoglutarate.

It depends on Fe(2+) as a cofactor. L-ascorbate serves as cofactor.

In Burkholderia orbicola (strain AU 1054), this protein is PKHD-type hydroxylase Bcen_3557.